The following is a 451-amino-acid chain: Methylenetetrahydrofolate--tRNA-(uracil-5-)-methyltransferase TrmFO (451 aa).

FAD is bound at residue 9-14 (GGGMAG).

Belongs to the MnmG family. TrmFO subfamily. FAD serves as cofactor.

The protein localises to the cytoplasm. It catalyses the reaction uridine(54) in tRNA + (6R)-5,10-methylene-5,6,7,8-tetrahydrofolate + NADH + H(+) = 5-methyluridine(54) in tRNA + (6S)-5,6,7,8-tetrahydrofolate + NAD(+). The enzyme catalyses uridine(54) in tRNA + (6R)-5,10-methylene-5,6,7,8-tetrahydrofolate + NADPH + H(+) = 5-methyluridine(54) in tRNA + (6S)-5,6,7,8-tetrahydrofolate + NADP(+). Functionally, catalyzes the folate-dependent formation of 5-methyl-uridine at position 54 (M-5-U54) in all tRNAs. This is Methylenetetrahydrofolate--tRNA-(uracil-5-)-methyltransferase TrmFO from Dinoroseobacter shibae (strain DSM 16493 / NCIMB 14021 / DFL 12).